A 544-amino-acid chain; its full sequence is (E,E)-germacrene B synthase (544 aa).

D296, D300, and E449 together coordinate Mg(2+). The DDXXD motif signature appears at 296-300 (DDTFD).

It belongs to the terpene synthase family. Mg(2+) is required as a cofactor. Mn(2+) serves as cofactor.

Its subcellular location is the cytoplasm. The catalysed reaction is (2E,6E)-farnesyl diphosphate = (1E,4E)-germacrene B + diphosphate. The protein operates within secondary metabolite biosynthesis; terpenoid biosynthesis. Its function is as follows. Involved in the biosynthesis of germacrene B. In Solanum habrochaites (Wild tomato), this protein is (E,E)-germacrene B synthase (SSTLH1).